A 375-amino-acid polypeptide reads, in one-letter code: Acetylornithine aminotransferase (375 aa).

Residues 93–94 (GT) and phenylalanine 120 contribute to the pyridoxal 5'-phosphate site. A N(2)-acetyl-L-ornithine-binding site is contributed by arginine 123. 205–208 (DEVQ) lines the pyridoxal 5'-phosphate pocket. Lysine 234 carries the post-translational modification N6-(pyridoxal phosphate)lysine. Threonine 262 contacts N(2)-acetyl-L-ornithine. Threonine 263 serves as a coordination point for pyridoxal 5'-phosphate.

The protein belongs to the class-III pyridoxal-phosphate-dependent aminotransferase family. ArgD subfamily. As to quaternary structure, homodimer. Pyridoxal 5'-phosphate is required as a cofactor.

The protein localises to the cytoplasm. The catalysed reaction is N(2)-acetyl-L-ornithine + 2-oxoglutarate = N-acetyl-L-glutamate 5-semialdehyde + L-glutamate. Its pathway is amino-acid biosynthesis; L-arginine biosynthesis; N(2)-acetyl-L-ornithine from L-glutamate: step 4/4. This is Acetylornithine aminotransferase from Staphylococcus epidermidis (strain ATCC 12228 / FDA PCI 1200).